We begin with the raw amino-acid sequence, 434 residues long: RNA-binding protein SRO9 (434 aa).

Positions 1–13 (MSAETAAANTATA) are enriched in low complexity. The interval 1–243 (MSAETAAANT…FHHNQQHPQQ (243 aa)) is disordered. Over residues 26–41 (SKQVNLTPAPLPTSSP) the composition is skewed to polar residues. Serine 55 carries the phosphoserine modification. Residues 93–124 (KRSGSKNGASNGNSNKSKNNKTAASSTSSSNA) are compositionally biased toward low complexity. A compositionally biased stretch (basic residues) spans 125-140 (NRKKKHHQHNAKKQQQ). Position 148 is a phosphoserine (serine 148). Lysine 156 participates in a covalent cross-link: Glycyl lysine isopeptide (Lys-Gly) (interchain with G-Cter in ubiquitin). A compositionally biased stretch (polar residues) spans 158 to 167 (ATSQENGQST). Residues 173 to 195 (PHHRNHHHSHHHNSNGPQRRKFH) show a composition bias toward basic residues. The segment covering 196–208 (NSNNAGMPQNQGF) has biased composition (polar residues). Over residues 218 to 227 (RNARNNNNNR) the composition is skewed to low complexity. The segment covering 228–238 (SKYHNHFHHNQ) has biased composition (basic residues). Residues 255–351 (VQPVLMAINN…KEGDNVTGEA (97 aa)) form the HTH La-type RNA-binding domain. Glycyl lysine isopeptide (Lys-Gly) (interchain with G-Cter in ubiquitin) cross-links involve residues lysine 301, lysine 342, and lysine 352. A disordered region spans residues 396-434 (SLPPVPQQEEESSTELASQEQETKEDSAPVAAGESESSL). Phosphoserine is present on serine 422.

In terms of assembly, interacts with HAP1. Component of the HMC including HAP1, SRO9 and YDJ1.

The protein localises to the cytoplasm. Functionally, may overlap in function with tropomyosin and may be involved in organization of actin filaments. Acts as a multicopy suppressor of RHO3 mutation. RNA-binding protein which may modulate mRNA translation. Involved in heme regulation of HAP1, as a component of the high-molecular-weight complex (HMC). In Saccharomyces cerevisiae (strain ATCC 204508 / S288c) (Baker's yeast), this protein is RNA-binding protein SRO9 (SRO9).